The following is a 132-amino-acid chain: Large ribosomal subunit protein uL14 (132 aa).

It belongs to the universal ribosomal protein uL14 family. Part of the 50S ribosomal subunit. Forms a cluster with proteins L3 and L24e, part of which may contact the 16S rRNA in 2 intersubunit bridges.

Functionally, binds to 23S rRNA. Forms part of two intersubunit bridges in the 70S ribosome. The protein is Large ribosomal subunit protein uL14 of Methanosarcina mazei (strain ATCC BAA-159 / DSM 3647 / Goe1 / Go1 / JCM 11833 / OCM 88) (Methanosarcina frisia).